We begin with the raw amino-acid sequence, 353 residues long: Methylthioribose-1-phosphate isomerase (353 aa).

Substrate-binding positions include 51–53, Arg-94, and Gln-203; that span reads RGA. The active-site Proton donor is the Asp-244. 254 to 255 lines the substrate pocket; sequence NK.

The protein belongs to the eIF-2B alpha/beta/delta subunits family. MtnA subfamily.

It carries out the reaction 5-(methylsulfanyl)-alpha-D-ribose 1-phosphate = 5-(methylsulfanyl)-D-ribulose 1-phosphate. Its pathway is amino-acid biosynthesis; L-methionine biosynthesis via salvage pathway; L-methionine from S-methyl-5-thio-alpha-D-ribose 1-phosphate: step 1/6. In terms of biological role, catalyzes the interconversion of methylthioribose-1-phosphate (MTR-1-P) into methylthioribulose-1-phosphate (MTRu-1-P). This is Methylthioribose-1-phosphate isomerase from Nostoc punctiforme (strain ATCC 29133 / PCC 73102).